Reading from the N-terminus, the 151-residue chain is Kinetoplast-associated protein 1 (151 aa).

Positions 1–9 are excised as a propeptide; it reads MLRVSVRSL. The tract at residues 13 to 151 is disordered; that stretch reads ASSKAGSKAA…KKGAAKKAHK (139 aa). 3 stretches are compositionally biased toward low complexity: residues 15–49, 70–91, and 101–111; these read SKAG…VPPV, AAAA…TPAK, and SKPSAPKQAAG. The span at 112–151 shows a compositional bias: basic residues; the sequence is KMRKAAGKAQRKIKAAARKAAPKKMAKSFGKKGAAKKAHK.

The protein belongs to the KAP family. As to quaternary structure, associates with the kinetoplast DNA network.

Its subcellular location is the mitochondrion matrix. The protein localises to the kinetoplast. Histone H1-like DNA-binding protein involved in the organization and segregation of kinetoplast DNA (kDNA). The mitochondrial DNA of kinetoplastid protozoa consists of about 5,000 minicircles and 20 to 30 maxicircles. These circular DNAs are held together by catenation into a highly organized compact disk structure referred to as a kinetoplast DNA (kDNA) network. Binds preferentially to a specific fragment of minicircle DNA and is able to compact kDNA networks through DNA charge neutralization and condensation. This chain is Kinetoplast-associated protein 1 (KAP4), found in Crithidia fasciculata.